Here is a 320-residue protein sequence, read N- to C-terminus: Lipoyl synthase (320 aa).

Positions 67, 72, 78, 93, 97, 100, and 307 each coordinate [4Fe-4S] cluster. Residues 79–296 enclose the Radical SAM core domain; sequence FNHGTATFMI…RDKANEMGFE (218 aa).

The protein belongs to the radical SAM superfamily. Lipoyl synthase family. The cofactor is [4Fe-4S] cluster.

The protein localises to the cytoplasm. The catalysed reaction is [[Fe-S] cluster scaffold protein carrying a second [4Fe-4S](2+) cluster] + N(6)-octanoyl-L-lysyl-[protein] + 2 oxidized [2Fe-2S]-[ferredoxin] + 2 S-adenosyl-L-methionine + 4 H(+) = [[Fe-S] cluster scaffold protein] + N(6)-[(R)-dihydrolipoyl]-L-lysyl-[protein] + 4 Fe(3+) + 2 hydrogen sulfide + 2 5'-deoxyadenosine + 2 L-methionine + 2 reduced [2Fe-2S]-[ferredoxin]. The protein operates within protein modification; protein lipoylation via endogenous pathway; protein N(6)-(lipoyl)lysine from octanoyl-[acyl-carrier-protein]: step 2/2. Functionally, catalyzes the radical-mediated insertion of two sulfur atoms into the C-6 and C-8 positions of the octanoyl moiety bound to the lipoyl domains of lipoate-dependent enzymes, thereby converting the octanoylated domains into lipoylated derivatives. The polypeptide is Lipoyl synthase (Haemophilus influenzae (strain PittEE)).